The following is a 327-amino-acid chain: tRNA uridine(34) hydroxylase (327 aa).

The 97-residue stretch at 122–218 folds into the Rhodanese domain; that stretch reads QENRCLVLDV…YGLKMGTGKW (97 aa). Cys178 functions as the Cysteine persulfide intermediate in the catalytic mechanism.

It belongs to the TrhO family.

It catalyses the reaction uridine(34) in tRNA + AH2 + O2 = 5-hydroxyuridine(34) in tRNA + A + H2O. Catalyzes oxygen-dependent 5-hydroxyuridine (ho5U) modification at position 34 in tRNAs. The protein is tRNA uridine(34) hydroxylase of Chlamydia trachomatis serovar A (strain ATCC VR-571B / DSM 19440 / HAR-13).